The primary structure comprises 695 residues: Threonine--tRNA ligase (695 aa).

Positions 6 to 75 (SAIFVNTTDT…ETTATFTAVP (70 aa)) constitute a TGS domain. The tract at residues 274-580 (DHRRLGTELD…LLEHYAGAFP (307 aa)) is catalytic. Positions 379, 430, and 557 each coordinate Zn(2+).

Belongs to the class-II aminoacyl-tRNA synthetase family. Homodimer. It depends on Zn(2+) as a cofactor.

The protein resides in the cytoplasm. It catalyses the reaction tRNA(Thr) + L-threonine + ATP = L-threonyl-tRNA(Thr) + AMP + diphosphate + H(+). Its function is as follows. Catalyzes the attachment of threonine to tRNA(Thr) in a two-step reaction: L-threonine is first activated by ATP to form Thr-AMP and then transferred to the acceptor end of tRNA(Thr). Also edits incorrectly charged L-seryl-tRNA(Thr). The chain is Threonine--tRNA ligase from Corynebacterium glutamicum (strain ATCC 13032 / DSM 20300 / JCM 1318 / BCRC 11384 / CCUG 27702 / LMG 3730 / NBRC 12168 / NCIMB 10025 / NRRL B-2784 / 534).